Consider the following 336-residue polypeptide: N-lysine methyltransferase KMT5A-B (336 aa).

2 disordered regions span residues 1-107 (MGRG…SSKQ) and 141-165 (QSQKMVKNKSQRRKAQRKKSPNRKL). A compositionally biased stretch (basic and acidic residues) spans 67–93 (SVAHHESKNLGKPTTETRKKAEVEKKR). Polar residues predominate over residues 95–104 (SSATELSVKS). Positions 146 to 162 (VKNKSQRRKAQRKKSPN) are enriched in basic residues. Positions 200 to 321 (DGMKMDMIIG…VGEELLYDYG (122 aa)) constitute an SET domain. S-adenosyl-L-methionine-binding positions include 210–212 (KGR), Tyr-255, and 282–283 (NH).

It belongs to the class V-like SAM-binding methyltransferase superfamily. Histone-lysine methyltransferase family. PR/SET subfamily. Phosphorylated during mitosis.

The protein resides in the nucleus. It is found in the chromosome. The enzyme catalyses L-lysyl(20)-[histone H4] + S-adenosyl-L-methionine = N(6)-methyl-L-lysyl(20)-[histone H4] + S-adenosyl-L-homocysteine + H(+). It catalyses the reaction L-lysyl-[protein] + S-adenosyl-L-methionine = N(6)-methyl-L-lysyl-[protein] + S-adenosyl-L-homocysteine + H(+). In terms of biological role, protein-lysine N-methyltransferase that monomethylates both histones and non-histone proteins. Specifically monomethylates 'Lys-20' of histone H4 (H4K20me1). H4K20me1 is enriched during mitosis and represents a specific tag for epigenetic transcriptional repression. Mainly functions in euchromatin regions, thereby playing a central role in the silencing of euchromatic genes. Required for cell proliferation, probably by contributing to the maintenance of proper higher-order structure of DNA during mitosis. Involved in chromosome condensation and proper cytokinesis. The chain is N-lysine methyltransferase KMT5A-B from Xenopus laevis (African clawed frog).